The following is a 266-amino-acid chain: Ribosomal RNA small subunit methyltransferase A (266 aa).

Residues asparagine 10, isoleucine 12, glycine 37, glutamate 58, aspartate 82, and asparagine 105 each contribute to the S-adenosyl-L-methionine site.

The protein belongs to the class I-like SAM-binding methyltransferase superfamily. rRNA adenine N(6)-methyltransferase family. RsmA subfamily.

It is found in the cytoplasm. The catalysed reaction is adenosine(1518)/adenosine(1519) in 16S rRNA + 4 S-adenosyl-L-methionine = N(6)-dimethyladenosine(1518)/N(6)-dimethyladenosine(1519) in 16S rRNA + 4 S-adenosyl-L-homocysteine + 4 H(+). Its function is as follows. Specifically dimethylates two adjacent adenosines (A1518 and A1519) in the loop of a conserved hairpin near the 3'-end of 16S rRNA in the 30S particle. May play a critical role in biogenesis of 30S subunits. The sequence is that of Ribosomal RNA small subunit methyltransferase A from Mycoplasma mycoides subsp. mycoides SC (strain CCUG 32753 / NCTC 10114 / PG1).